A 107-amino-acid polypeptide reads, in one-letter code: Large ribosomal subunit protein bL21 (107 aa).

This sequence belongs to the bacterial ribosomal protein bL21 family. As to quaternary structure, part of the 50S ribosomal subunit. Contacts protein L20.

In terms of biological role, this protein binds to 23S rRNA in the presence of protein L20. The chain is Large ribosomal subunit protein bL21 from Chlamydia muridarum (strain MoPn / Nigg).